The chain runs to 448 residues: Homogentisate 1,2-dioxygenase (448 aa).

A disordered region spans residues 1 to 26 (MNMLAPAAKNAFTPASPDRPAYQSGF). His302 (proton acceptor) is an active-site residue. Positions 345 and 351 each coordinate Fe cation. Positions 360 and 381 each coordinate homogentisate. A Fe cation-binding site is contributed by His381.

It belongs to the homogentisate dioxygenase family. In terms of assembly, hexamer; dimer of trimers. Fe cation serves as cofactor.

The enzyme catalyses homogentisate + O2 = 4-maleylacetoacetate + H(+). The protein operates within amino-acid degradation; L-phenylalanine degradation; acetoacetate and fumarate from L-phenylalanine: step 4/6. Its function is as follows. Involved in the catabolism of homogentisate (2,5-dihydroxyphenylacetate or 2,5-OH-PhAc), a central intermediate in the degradation of phenylalanine and tyrosine. Catalyzes the oxidative ring cleavage of the aromatic ring of homogentisate to yield maleylacetoacetate. The chain is Homogentisate 1,2-dioxygenase from Ralstonia nicotianae (strain ATCC BAA-1114 / GMI1000) (Ralstonia solanacearum).